The chain runs to 134 residues: NADH-quinone oxidoreductase subunit A (134 aa).

The next 3 membrane-spanning stretches (helical) occupy residues 14–34 (FFMFIFFSLGLCFFMLCLSWI), 66–86 (FYLIAMFFVVFDVEALYLYAW), and 96–116 (IGFSEALMFGISLLLGLFYLV).

It belongs to the complex I subunit 3 family. As to quaternary structure, NDH-1 is composed of 13 different subunits. Subunits NuoA, H, J, K, L, M, N constitute the membrane sector of the complex.

The protein resides in the cell membrane. It catalyses the reaction a quinone + NADH + 5 H(+)(in) = a quinol + NAD(+) + 4 H(+)(out). In terms of biological role, NDH-1 shuttles electrons from NADH, via FMN and iron-sulfur (Fe-S) centers, to quinones in the respiratory chain. The immediate electron acceptor for the enzyme in this species is believed to be ubiquinone. Couples the redox reaction to proton translocation (for every two electrons transferred, four hydrogen ions are translocated across the cytoplasmic membrane), and thus conserves the redox energy in a proton gradient. The chain is NADH-quinone oxidoreductase subunit A from Buchnera aphidicola subsp. Acyrthosiphon pisum (strain APS) (Acyrthosiphon pisum symbiotic bacterium).